The primary structure comprises 630 residues: Eukaryotic translation initiation factor 2-alpha kinase 1 (630 aa).

The disordered stretch occupies residues 1–40 (MQGGNSGVRKREEEGDGAGAVAAPPAIDFPAEGPDPEYDE). The short motif at 85 to 104 (LRSRQVFKLLCQTFIKMGLL) is the SIFI-degron element. The region spanning 167-583 (FEELAILGKG…AIQLLQSELF (417 aa)) is the Protein kinase domain. Residues 173–181 (LGKGGYGRV) and Lys196 each bind ATP. Residues 259–301 (DQEEDREQCGVKNDESSSSSIIFAEPTPEKEKRFGESDTENQN) are disordered. The residue at position 285 (Thr285) is a Phosphothreonine. Over residues 285–294 (TPEKEKRFGE) the composition is skewed to basic and acidic residues. The HRM 1 repeat unit spans residues 410 to 415 (ACPYVM). The active-site Proton acceptor is the Asp442. A phosphothreonine; by autocatalysis mark is found at Thr486 and Thr488. Phosphothreonine is present on Thr493. One copy of the HRM 2 repeat lies at 552 to 557 (RCPVQA).

It belongs to the protein kinase superfamily. Ser/Thr protein kinase family. GCN2 subfamily. In terms of assembly, synthesized in an inactive form that binds to the N-terminal domain of CDC37. Has to be associated with a multiprotein complex containing Hsp90, CDC37 and PPP5C for maturation and activation by autophosphorylation. The phosphatase PPP5C modulates this activation. Homodimer; homodimerizes in presence of heme, forming a disulfide-linked inactive homodimer. Interacts with DELE1; binds both to full-length DELE1 and processed form of DELE1 (S-DELE1) in response to stress, leading to activate its protein kinase activity and trigger the integrated stress response (ISR). Post-translationally, activated by autophosphorylation; phosphorylated predominantly on serine and threonine residues, but also on tyrosine residues. Autophosphorylation at Thr-488 is required for kinase activation. The active autophosphorylated form apparently is largely refractory to cellular heme fluctuations. In terms of processing, ubiquitinated and degraded by the SIFI complex once the mitochondrial stress has been resolved, thereby providing stress response silencing. Within the SIFI complex, UBR4 initiates ubiquitin chain that are further elongated or branched by KCMF1.

The catalysed reaction is L-seryl-[protein] + ATP = O-phospho-L-seryl-[protein] + ADP + H(+). It carries out the reaction L-threonyl-[protein] + ATP = O-phospho-L-threonyl-[protein] + ADP + H(+). In normal conditions, the protein kinase activity is inhibited; inhibition is relieved by various stress conditions. Inhibited by heme: in presence of heme, forms a disulfide-linked inactive homodimer. Heme depletion relieves inhibition and stimulates kinase activity by autophosphorylation. Inhibited by the heme metabolites biliverdin and bilirubin. Induced by oxidative stress generated by arsenite treatment. Binding of nitric oxide (NO) to the heme iron in the N-terminal heme-binding domain activates the kinase activity, while binding of carbon monoxide (CO) suppresses kinase activity. Protein kinase activity is also activated upon binding to DELE1 in response to various stress, triggering the integrated stress response (ISR): activated by full-length DELE1 in response to iron deficiency, while it is activated by the processed form of DELE1 (S-DELE1) in response to mitochondrial stress. Its function is as follows. Metabolic-stress sensing protein kinase that phosphorylates the alpha subunit of eukaryotic translation initiation factor 2 (EIF2S1/eIF-2-alpha) in response to various stress conditions. Key activator of the integrated stress response (ISR) required for adaptation to various stress, such as heme deficiency, oxidative stress, osmotic shock, mitochondrial dysfunction and heat shock. EIF2S1/eIF-2-alpha phosphorylation in response to stress converts EIF2S1/eIF-2-alpha in a global protein synthesis inhibitor, leading to a global attenuation of cap-dependent translation, while concomitantly initiating the preferential translation of ISR-specific mRNAs, such as the transcriptional activator ATF4, and hence allowing ATF4-mediated reprogramming. Acts as a key sensor of heme-deficiency: in normal conditions, binds hemin via a cysteine thiolate and histidine nitrogenous coordination, leading to inhibit the protein kinase activity. This binding occurs with moderate affinity, allowing it to sense the heme concentration within the cell: heme depletion relieves inhibition and stimulates kinase activity, activating the ISR. Thanks to this unique heme-sensing capacity, plays a crucial role to shut off protein synthesis during acute heme-deficient conditions. In red blood cells (RBCs), controls hemoglobin synthesis ensuring a coordinated regulation of the synthesis of its heme and globin moieties. It thereby plays an essential protective role for RBC survival in anemias of iron deficiency. Iron deficiency also triggers activation by full-length DELE1. Also activates the ISR in response to mitochondrial dysfunction: HRI/EIF2AK1 protein kinase activity is activated upon binding to the processed form of DELE1 (S-DELE1), thereby promoting the ATF4-mediated reprogramming. Also acts as an activator of mitophagy in response to mitochondrial damage: catalyzes phosphorylation of eIF-2-alpha (EIF2S1) following activation by S-DELE1, thereby promoting mitochondrial localization of EIF2S1, triggering PRKN-independent mitophagy. In Homo sapiens (Human), this protein is Eukaryotic translation initiation factor 2-alpha kinase 1.